A 179-amino-acid polypeptide reads, in one-letter code: MNRLKEKFQKEITPALMSKFNYKSVMEVPKIEKIVINTGVGDAVSNSKALDNAVEELTQIAGQKPVVTRAKKSIAGFRLREGMPIGAKVTLRGQQMYEFFDKLVSVSLPRVRDFRGVSKKSFDGRGNYTLGVKEQLIFPEIDYDKVSKVRGMDIVIVTTAKTDEEARELLTQFGMPFQK.

It belongs to the universal ribosomal protein uL5 family. Part of the 50S ribosomal subunit; part of the 5S rRNA/L5/L18/L25 subcomplex. Contacts the 5S rRNA and the P site tRNA. Forms a bridge to the 30S subunit in the 70S ribosome.

In terms of biological role, this is one of the proteins that bind and probably mediate the attachment of the 5S RNA into the large ribosomal subunit, where it forms part of the central protuberance. In the 70S ribosome it contacts protein S13 of the 30S subunit (bridge B1b), connecting the 2 subunits; this bridge is implicated in subunit movement. Contacts the P site tRNA; the 5S rRNA and some of its associated proteins might help stabilize positioning of ribosome-bound tRNAs. This is Large ribosomal subunit protein uL5 from Bacillus mycoides (strain KBAB4) (Bacillus weihenstephanensis).